A 1022-amino-acid polypeptide reads, in one-letter code: Protein translocase subunit SECA1, chloroplastic (1022 aa).

The N-terminal 72 residues, 1 to 72 (MVSPLCDSQL…SRKRSTSVNA (72 aa)), are a transit peptide targeting the chloroplast. Serine 73 is subject to N-acetylserine. 176-183 (MRTGEGKT) is a binding site for ATP. The disordered stretch occupies residues 985-1022 (KDEEKKSQNGKPSKQVDNASEKPKQVGVTDEPSSIASA). Polar residues predominate over residues 993–1002 (NGKPSKQVDN).

It belongs to the SecA family. In terms of assembly, part of the Sec protein translocation apparatus. Interacts probably with SCY1. Expressed in green tissues, including cotyledons, rosette and cauline leaves, and sepals. Also detected at the base and the tip of the trichome.

The protein localises to the plastid. The protein resides in the chloroplast stroma. It localises to the chloroplast thylakoid membrane. The enzyme catalyses ATP + H2O + chloroplast-proteinSide 1 = ADP + phosphate + chloroplast-proteinSide 2.. Has a central role in coupling the hydrolysis of ATP to the transfer of proteins across the thylakoid membrane. Involved in photosynthetic acclimation and required for chloroplast biogenesis. This Arabidopsis thaliana (Mouse-ear cress) protein is Protein translocase subunit SECA1, chloroplastic.